A 495-amino-acid chain; its full sequence is Ribitol 5-phosphate transferase FKRP (495 aa).

Residues 1–6 are Cytoplasmic-facing; it reads MRLTRC. Residues 7 to 29 form a helical membrane-spanning segment; it reads QAALAAAITLNLLVLFYVSWLQH. The Lumenal segment spans residues 30-495; the sequence is QPRNSRARGP…PALLSLTGSG (466 aa). Cysteines 168 and 191 form a disulfide. N-linked (GlcNAc...) asparagine glycans are attached at residues asparagine 172 and asparagine 209. Zn(2+)-binding residues include cysteine 289, cysteine 296, cysteine 317, and cysteine 318. The zinc finger loop stretch occupies residues 289 to 318; the sequence is CNKETTRCFGTVVGDTPAYLYEERWTPPCC. CDP-L-ribitol-binding positions include glycine 345, arginine 352, 359–364, 437–438, and 480–482; these read WDYDVD, QD, and NPQ. Residues aspartate 360, aspartate 362, and aspartate 364 each contribute to the Mg(2+) site.

The protein belongs to the LicD transferase family. Homodimer; disulfide-linked. Tetramer. Forms a complex composed of FKRP, FKTN/fukutin, and RXYLT1/TMEM5. Also exists as large multimeric protein complexes. May interact with the dystrophin-glycoprotein complex (DGC). Mg(2+) is required as a cofactor. In terms of processing, N-glycosylated. In terms of tissue distribution, expressed in the retina (at protein level). Expressed predominantly in skeletal muscle, placenta, and heart and relatively weakly in brain, lung, liver, kidney, and pancreas.

The protein resides in the golgi apparatus membrane. Its subcellular location is the secreted. It is found in the cell membrane. It localises to the sarcolemma. The protein localises to the rough endoplasmic reticulum. The protein resides in the cytoplasm. It carries out the reaction 3-O-[Rib-ol-P-3-beta-D-GalNAc-(1-&gt;3)-beta-D-GlcNAc-(1-&gt;4)-(O-6-P-alpha-D-Man)]-Thr-[protein] + CDP-L-ribitol = 3-O-[Rib-ol-P-Rib-ol-P-3-beta-D-GalNAc-(1-&gt;3)-beta-D-GlcNAc-(1-&gt;4)-(O-6-P-alpha-D-Man)]-Thr-[protein] + CMP + H(+). The protein operates within protein modification; protein glycosylation. Functionally, catalyzes the transfer of a ribitol 5-phosphate from CDP-L-ribitol to the ribitol 5-phosphate previously attached by FKTN/fukutin to the phosphorylated O-mannosyl trisaccharide (N-acetylgalactosamine-beta-3-N-acetylglucosamine-beta-4-(phosphate-6-)mannose), a carbohydrate structure present in alpha-dystroglycan (DAG1). This constitutes the second step in the formation of the ribose 5-phosphate tandem repeat which links the phosphorylated O-mannosyl trisaccharide to the ligand binding moiety composed of repeats of 3-xylosyl-alpha-1,3-glucuronic acid-beta-1. This Homo sapiens (Human) protein is Ribitol 5-phosphate transferase FKRP.